Here is a 178-residue protein sequence, read N- to C-terminus: uncharacterized protein (178 aa).

Residues Leu-7–Glu-27 traverse the membrane as a helical segment.

It is found in the membrane. This is an uncharacterized protein from Methanocaldococcus jannaschii (strain ATCC 43067 / DSM 2661 / JAL-1 / JCM 10045 / NBRC 100440) (Methanococcus jannaschii).